The sequence spans 382 residues: D-galactonate dehydratase (382 aa).

A Mg(2+)-binding site is contributed by D183. Residue H185 is the Proton donor of the active site. Mg(2+)-binding residues include E209 and E235. H285 serves as the catalytic Proton acceptor.

Belongs to the mandelate racemase/muconate lactonizing enzyme family. GalD subfamily. Mg(2+) serves as cofactor.

It carries out the reaction D-galactonate = 2-dehydro-3-deoxy-D-galactonate + H2O. It participates in carbohydrate acid metabolism; D-galactonate degradation; D-glyceraldehyde 3-phosphate and pyruvate from D-galactonate: step 1/3. Its function is as follows. Catalyzes the dehydration of D-galactonate to 2-keto-3-deoxy-D-galactonate. The chain is D-galactonate dehydratase from Variovorax paradoxus (strain S110).